A 306-amino-acid chain; its full sequence is MKMNKSLIVLCLSAGLLASAPGISLADVNYVPQNTSDAPAIPSAALQQLTWTPVDQSKTQTTQLATGGQQLNVPGISGPVAAYSVPANIGELTLTLTSEVNKQTSVFAPNVLILDQNMTPSAFFPSSYFTYQEPGVMSADRLEGVMRLTPALGQQKLYVLVFTTEKDLQQTTQLLDPAKAYAKGVGNSIPDIPDPVARHTTDGLLKLKVKTNSSSSVLVGPLFGSSAPAPVTVGNTAAPAVAAPAPAPVKKSEPMLNDTESYFNTAIKNAVAKGDVDKALKLLDEAERLGSTSARSTFISSVKGKG.

A signal peptide (or 26) is located at residues 1–22 (MKMNKSLIVLCLSAGLLASAPG).

It to S.typhimurium MalM.

It localises to the periplasm. In terms of biological role, not yet known. Might function in the uptake of a still unidentified substrate. This is Maltose operon periplasmic protein (malM) from Escherichia coli (strain K12).